The primary structure comprises 307 residues: tRNA dimethylallyltransferase (307 aa).

9-16 is a binding site for ATP; the sequence is GPTAVGKT. 11–16 lines the substrate pocket; that stretch reads TAVGKT. An interaction with substrate tRNA region spans residues 34–37; sequence DSMQ.

It belongs to the IPP transferase family. In terms of assembly, monomer. Mg(2+) serves as cofactor.

The enzyme catalyses adenosine(37) in tRNA + dimethylallyl diphosphate = N(6)-dimethylallyladenosine(37) in tRNA + diphosphate. Its function is as follows. Catalyzes the transfer of a dimethylallyl group onto the adenine at position 37 in tRNAs that read codons beginning with uridine, leading to the formation of N6-(dimethylallyl)adenosine (i(6)A). This is tRNA dimethylallyltransferase from Limosilactobacillus reuteri (strain DSM 20016) (Lactobacillus reuteri).